We begin with the raw amino-acid sequence, 365 residues long: 3-isopropylmalate dehydrogenase (365 aa).

78–91 is an NAD(+) binding site; it reads GKKWNNLPIEKRPE. Substrate contacts are provided by R99, R109, R139, and D228. Mg(2+)-binding residues include D228, D252, and D256. 286–298 serves as a coordination point for NAD(+); it reads GSAPDIAGKNIAN.

The protein belongs to the isocitrate and isopropylmalate dehydrogenases family. LeuB type 1 subfamily. In terms of assembly, homodimer. Mg(2+) serves as cofactor. Requires Mn(2+) as cofactor.

The protein localises to the cytoplasm. It carries out the reaction (2R,3S)-3-isopropylmalate + NAD(+) = 4-methyl-2-oxopentanoate + CO2 + NADH. Its pathway is amino-acid biosynthesis; L-leucine biosynthesis; L-leucine from 3-methyl-2-oxobutanoate: step 3/4. Its function is as follows. Catalyzes the oxidation of 3-carboxy-2-hydroxy-4-methylpentanoate (3-isopropylmalate) to 3-carboxy-4-methyl-2-oxopentanoate. The product decarboxylates to 4-methyl-2 oxopentanoate. The protein is 3-isopropylmalate dehydrogenase of Buchnera aphidicola subsp. Macrosiphoniella ludovicianae.